Here is a 222-residue protein sequence, read N- to C-terminus: 25 kDa elongation factor 1-beta (222 aa).

Residues 75–94 (TSASAPAKQAPKKAASAPAK) show a composition bias toward low complexity. Residues 75–98 (TSASAPAKQAPKKAASAPAKQADE) are disordered.

Belongs to the EF-1-beta/EF-1-delta family. EF-1 is composed of 4 subunits: alpha, beta, delta, and gamma.

In terms of biological role, EF-1-beta and EF-1-delta stimulate the exchange of GDP bound to EF-1-alpha to GTP. The chain is 25 kDa elongation factor 1-beta from Trypanosoma cruzi.